The primary structure comprises 468 residues: Mothers against decapentaplegic homolog 1 (468 aa).

An N-acetylmethionine modification is found at methionine 1. One can recognise an MH1 domain in the interval 12–136 (PAVKRLLGWK…YKRVESPVLP (125 aa)). Zn(2+) contacts are provided by cysteine 64, cysteine 109, cysteine 121, and histidine 126. The disordered stretch occupies residues 162-246 (NEPHMPLNAT…DGSQPMDTNM (85 aa)). Residues 188 to 210 (PNSSYPNSPGSSSSTYPHSPTSS) are compositionally biased toward low complexity. Pro residues predominate over residues 221–232 (DTPPPAYLPPED). A compositionally biased stretch (polar residues) spans 237–246 (DGSQPMDTNM). Residues 274–468 (WCSIVYYELN…SPHNPISSVS (195 aa)) form the MH2 domain. Threonine 325 carries the post-translational modification Phosphothreonine; by MINK1, TNIK and MAP4K4. The tract at residues 421 to 431 (KGWGAEYHRQD) is L3 loop. Residues serine 466 and serine 468 each carry the phosphoserine modification.

Belongs to the dwarfin/SMAD family. In terms of assembly, found in a complex with SMAD4 and YY1. Interacts with HGS, NANOG and ZCCHC12. Upon C-terminus phosphorylation: forms trimers with another SMAD1 and the co-SMAD SMAD4. Interacts with PEBP2-alpha subunit, CREB-binding protein (CBP), p300, SMURF1, SMURF2, USP15 and HOXC8. Associates with ZNF423 or ZNF521 in response to BMP2 leading to activate transcription of BMP target genes. Interacts with SKOR1. Interacts (via MH2 domain) with LEMD3. Binding to LEMD3 results in at least a partial reduction of receptor-mediated phosphorylation. Forms a ternary complex with PSMB4 and OAZ1 before PSMB4 is incorporated into the 20S proteasome. Interacts (via MH2 domain) with FAM83G (via MH2 domain); in a SMAD4-independent manner. Interacts with ZC3H3. Interacts with TMEM119. Interacts (via MH1 and MH2 domains) with ZNF8. Interacts with RANBP3L; the interaction increases when SMAD1 is not phosphorylated and mediates SMAD1 nuclear export. Interacts with EGR1; this interaction inhibits SMAD1 dephosphorylation. Interacts with SMAD6. Interacts with YAP1. Interacts with MTMR4; negatively regulates BMP signaling through SMAD1 dephosphorylation and retention in endosomes. Phosphorylation of the C-terminal SVS motif by BMP type 1 receptor kinase activates SMAD1 by promoting dissociation from the receptor and trimerization with SMAD4. Phosphorylation by ERK2 MAP kinase in response to EGF or HGF prevents SMAD1 nuclear accumulation and transcriptional activity in response to BMP. Dephosphorylation, probably by PPM1A, induces its export from the nucleus to the cytoplasm. Dephosphorylation is inhibited by association with EGR1. Phosphorylation by CDK8/9 creates binding sites for YAP1, and subsequent phosphorylation by GSK3 switches off YAP1 binding and adds binding sites for SMURF1. Post-translationally, ubiquitinated by SMAD-specific E3 ubiquitin ligase SMURF1, leading to its degradation. Monoubiquitinated, leading to prevent DNA-binding. Deubiquitination by USP15 alleviates inhibition and promotes activation of TGF-beta target genes. Dephosphorylation, probably by PPM1A, induces its export from the nucleus to the cytoplasm. Phospho-SMAD1 is ubiquitinated by CHIP leading to disruption of the SMAD1-SMAD4 complex. Ubiquitous; present in liver, lung, stomach and spleen with lower level in heart, testes and skeletal muscle.

Its subcellular location is the cytoplasm. The protein localises to the nucleus. Functionally, transcriptional modulator that plays a role in various cellular processes, including embryonic development, cell differentiation, and tissue homeostasis. Upon BMP ligand binding to their receptors at the cell surface, is phosphorylated by activated type I BMP receptors (BMPRIs) and associates with SMAD4 to form an heteromeric complex which translocates into the nucleus acting as transcription factor. In turn, the hetero-trimeric complex recognizes cis-regulatory elements containing Smad Binding Elements (SBEs) to modulate the outcome of the signaling network. SMAD1/OAZ1/PSMB4 complex mediates the degradation of the CREBBP/EP300 repressor SNIP1. Positively regulates BMP4-induced expression of odontogenic development regulator MSX1 following IPO7-mediated nuclear import. In Rattus norvegicus (Rat), this protein is Mothers against decapentaplegic homolog 1 (Smad1).